The sequence spans 345 residues: Phosphoribosylformylglycinamidine cyclo-ligase (345 aa).

This sequence belongs to the AIR synthase family.

It is found in the cytoplasm. It carries out the reaction 2-formamido-N(1)-(5-O-phospho-beta-D-ribosyl)acetamidine + ATP = 5-amino-1-(5-phospho-beta-D-ribosyl)imidazole + ADP + phosphate + H(+). It participates in purine metabolism; IMP biosynthesis via de novo pathway; 5-amino-1-(5-phospho-D-ribosyl)imidazole from N(2)-formyl-N(1)-(5-phospho-D-ribosyl)glycinamide: step 2/2. This chain is Phosphoribosylformylglycinamidine cyclo-ligase, found in Bifidobacterium longum (strain DJO10A).